A 273-amino-acid chain; its full sequence is Torsin-1A (273 aa).

The tract at residues 45-205 (KPKKPLTLSL…VSVFNNKNSG (161 aa)) is interaction with SNAPIN. 56–63 (GWTGTGKN) serves as a coordination point for ATP. N-linked (GlcNAc...) asparagine glycosylation is found at Asn97 and Asn112.

This sequence belongs to the ClpA/ClpB family. Torsin subfamily. As to quaternary structure, homohexamer. Interacts with TOR1B; the interaction may be specific of neural tissues. Interacts (ATP-bound) with TOR1AIP1 and TOR1AIP2; the interactions induce ATPase activity. Interacts with KLHL14; preferentially when ATP-free. Interacts with KLC1 (via TPR repeats); the interaction associates TOR1A with the kinesin oligomeric complex. Interacts with COPS4; the interaction associates TOR1A with the CSN complex. Interacts with SNAPIN; the interaction is direct and associates SNAPIN with the CSN complex. Interacts with STON2. Interacts (ATP-bound) with SYNE3 (via KASH domain); the interaction is required for SYNE3 nuclear envelope localization. Interacts with VIM; the interaction associates TOR1A with the cytoskeleton. Interacts with PLEC. Interacts (ATP-bound) with SLC6A3; regulates SLC6A3 transport to the plasma membrane. N-glycosylated.

The protein localises to the endoplasmic reticulum lumen. The protein resides in the nucleus membrane. It localises to the cell projection. It is found in the growth cone. Its subcellular location is the cytoplasmic vesicle membrane. The protein localises to the synapse. The protein resides in the synaptosome. It localises to the cytoplasm. It is found in the cytoskeleton. The enzyme catalyses ATP + H2O = ADP + phosphate + H(+). In terms of biological role, protein with chaperone functions important for the control of protein folding, processing, stability and localization as well as for the reduction of misfolded protein aggregates. Involved in the regulation of synaptic vesicle recycling, controls STON2 protein stability in collaboration with the COP9 signalosome complex (CSN). In the nucleus, may link the cytoskeleton with the nuclear envelope, this mechanism seems to be crucial for the control of nuclear polarity, cell movement and, specifically in neurons, nuclear envelope integrity. Participates in the cellular trafficking and may regulate the subcellular location of multipass membrane proteins such as the dopamine transporter SLC6A3, leading to the modulation of dopamine neurotransmission. In the endoplasmic reticulum, plays a role in the quality control of protein folding by increasing clearance of misfolded proteins such as SGCE variants or holding them in an intermediate state for proper refolding. May have a redundant function with TOR1B in non-neural tissues. The chain is Torsin-1A (TOR1A) from Cricetus cricetus (Black-bellied hamster).